The sequence spans 493 residues: Guanosine-5'-triphosphate,3'-diphosphate pyrophosphatase (493 aa).

This sequence belongs to the GppA/Ppx family. GppA subfamily.

The enzyme catalyses guanosine 3'-diphosphate 5'-triphosphate + H2O = guanosine 3',5'-bis(diphosphate) + phosphate + H(+). It functions in the pathway purine metabolism; ppGpp biosynthesis; ppGpp from GTP: step 2/2. Its function is as follows. Catalyzes the conversion of pppGpp to ppGpp. Guanosine pentaphosphate (pppGpp) is a cytoplasmic signaling molecule which together with ppGpp controls the 'stringent response', an adaptive process that allows bacteria to respond to amino acid starvation, resulting in the coordinated regulation of numerous cellular activities. This chain is Guanosine-5'-triphosphate,3'-diphosphate pyrophosphatase, found in Salmonella heidelberg (strain SL476).